Consider the following 129-residue polypeptide: Ropporin-1 (129 aa).

One can recognise an RIIa domain in the interval 11–34; it reads PELPELLKTQPPDLIQWAAEYFGA.

It belongs to the ropporin family. As to quaternary structure, homodimer. Interacts with AKAP3. May interact with SPA17. Interacts with RHPN1. Interacts with FSCB; the interaction increases upon spermatozoa capacitation conditions. Interacts with CFAP61. Post-translationally, sumoylated, sumoylation decreases upon spermatozoa capacitation conditions.

It is found in the cell projection. The protein localises to the cilium. It localises to the flagellum. Important for male fertility. With ROPN1L, involved in fibrous sheath integrity and sperm motility, plays a role in PKA-dependent signaling processes required for spermatozoa capacitation. This chain is Ropporin-1, found in Mesocricetus auratus (Golden hamster).